The following is a 355-amino-acid chain: Inositol polyphosphate multikinase (355 aa).

Residue Met1 is modified to N-acetylmethionine. Residue Lys31 coordinates ATP. Residue Ser97 is modified to Phosphoserine. ATP is bound by residues 118–120 (ENL) and Asp131. Position 127-135 (127-135 (PNILDIKLG)) interacts with substrate. 2 residues coordinate Ca(2+): Glu271 and Asn274. Residues 284 to 304 (FIDDDDDDDDNDDDDDDDAEG) show a composition bias toward acidic residues. The segment at 284–317 (FIDDDDDDDDNDDDDDDDAEGSSEGPKDKKTTGS) is disordered. Residue Asp325 coordinates ATP. A Ca(2+)-binding site is contributed by Gly334.

Belongs to the inositol phosphokinase (IPK) family. Interacts with ARG80 and MCM1. The cofactor is Ca(2+).

It is found in the nucleus. It carries out the reaction 1D-myo-inositol 1,4,5-trisphosphate + 2 ATP = 1D-myo-inositol 1,3,4,5,6-pentakisphosphate + 2 ADP + 2 H(+). It catalyses the reaction 1D-myo-inositol 1,4,5-trisphosphate + ATP = 1D-myo-inositol 1,4,5,6-tetrakisphosphate + ADP + H(+). The catalysed reaction is 1D-myo-inositol 1,4,5-trisphosphate + ATP = 1D-myo-inositol 1,3,4,5-tetrakisphosphate + ADP + H(+). The enzyme catalyses 1D-myo-inositol 1,4,5,6-tetrakisphosphate + ATP = 1D-myo-inositol 1,3,4,5,6-pentakisphosphate + ADP + H(+). It carries out the reaction a 1,2-diacyl-sn-glycero-3-phospho-(1D-myo-inositol-4,5-bisphosphate) + ATP = a 1,2-diacyl-sn-glycero-3-phospho-(1D-myo-inositol-3,4,5-trisphosphate) + ADP + H(+). Inositol phosphate kinase with both monophosphoinositol and diphosphoinositol polyphosphate synthase activities. Able to phosphorylate inositol 1,4,5-trisphosphate (Ins(1,4,5)P3) on both the carbon-3 and carbon-6 positions to synthesize inositol 1,3,4,5-tetrakisphosphate (Ins(1,3,4,5)P4) and inositol 1,4,5,6-tetrakisphosphate (Ins(1,4,5,6)P4), and then to subsequently phosphorylate and convert either isomer of InsP4 to inositol 1,3,4,5,6-pentakisphosphate (Ins(1,3,4,5,6)P5). Its predominant in vivo catalytic function is to convert Ins(1,4,5)P3 to Ins(1,4,5,6)P4 to Ins(1,3,4,5,6)P5 via 6- and 3-kinase activities. It can also use Ins(1,3,4,5,6)P5 as a substrate and act as a diphosphoinositol polyphosphate synthase to generate two different isomers of PP-InsP4. Also has a role in transcription regulation. Forms a complex with ARG80, ARG81 and MCM1 (ArgR-MCM1), which coordinates the expression of arginine anabolic and catabolic genes in response to arginine. Recruits ARG80 and MCM21 to stabilize them. Neither the kinase activity nor inositol phosphates are required for the formation of ArgR-MCM1 transcriptional complexes on DNA promoter elements and the control of arginine metabolism. In contrast, only the catalytic activity is required for PHO gene repression by phosphate and for NCR gene activation in response to nitrogen availability, indicating a role for inositol pyrophosphates in these controls. Inositol polyphosphates may be involved in the regulation of chromatin remodeling of transcription. Regulates nuclear mRNA export via inositol phosphate metabolism. Also has lipid kinase activity, transforming the lipid inositol phosphatidylinositol 4,5-bisphosphate (PI(4,5)P2) into phosphatidylinositol 3,4,5-trisphosphate (PI(3,4,5)P3) in the nucleus. Its kinase activity is necessary for the propagation of most [PSI+] prion variants. In Saccharomyces cerevisiae (strain ATCC 204508 / S288c) (Baker's yeast), this protein is Inositol polyphosphate multikinase (ARG82).